Here is a 319-residue protein sequence, read N- to C-terminus: Ribonuclease Z (319 aa).

Zn(2+) is bound by residues His62, His64, Asp66, His67, His145, Asp216, and His274. Asp66 functions as the Proton acceptor in the catalytic mechanism.

The protein belongs to the RNase Z family. In terms of assembly, homodimer. Zn(2+) is required as a cofactor.

The catalysed reaction is Endonucleolytic cleavage of RNA, removing extra 3' nucleotides from tRNA precursor, generating 3' termini of tRNAs. A 3'-hydroxy group is left at the tRNA terminus and a 5'-phosphoryl group is left at the trailer molecule.. Functionally, zinc phosphodiesterase, which displays some tRNA 3'-processing endonuclease activity. Probably involved in tRNA maturation, by removing a 3'-trailer from precursor tRNA. The chain is Ribonuclease Z from Synechococcus sp. (strain CC9605).